The chain runs to 123 residues: MAKLTKQAFVEALKEMSLLEIKELVDGLKEEFGIDPSAVAVAAGPAAAAEVEEKTEFNVVLKSFGDKKIEVIKVTREVTGLGLVEAKKLVETADAVIKENAKKDEAEALKAKFEAAGAVVEIV.

It belongs to the bacterial ribosomal protein bL12 family. In terms of assembly, homodimer. Part of the ribosomal stalk of the 50S ribosomal subunit. Forms a multimeric L10(L12)X complex, where L10 forms an elongated spine to which 2 to 4 L12 dimers bind in a sequential fashion. Binds GTP-bound translation factors.

Forms part of the ribosomal stalk which helps the ribosome interact with GTP-bound translation factors. Is thus essential for accurate translation. The polypeptide is Large ribosomal subunit protein bL12 (Acholeplasma laidlawii (strain PG-8A)).